The chain runs to 591 residues: L-fucose isomerase (591 aa).

Catalysis depends on proton acceptor residues Glu337 and Asp361. Mn(2+) is bound by residues Glu337, Asp361, and His528.

It belongs to the L-fucose isomerase family. In terms of assembly, homohexamer. It depends on Mn(2+) as a cofactor.

The protein localises to the cytoplasm. It catalyses the reaction L-fucose = L-fuculose. The protein operates within carbohydrate degradation; L-fucose degradation; L-lactaldehyde and glycerone phosphate from L-fucose: step 1/3. In terms of biological role, converts the aldose L-fucose into the corresponding ketose L-fuculose. The chain is L-fucose isomerase from Salmonella choleraesuis (strain SC-B67).